Here is a 76-residue protein sequence, read N- to C-terminus: UPF0291 protein GK1331 (76 aa).

The tract at residues 57–76 (PSGNDVTPKKLKESQRRRFH) is disordered. A compositionally biased stretch (basic and acidic residues) spans 63–76 (TPKKLKESQRRRFH).

It belongs to the UPF0291 family.

It is found in the cytoplasm. The sequence is that of UPF0291 protein GK1331 from Geobacillus kaustophilus (strain HTA426).